The sequence spans 349 residues: Protein-glutamate methylesterase/protein-glutamine glutaminase (349 aa).

The Response regulatory domain maps to 2 to 118; that stretch reads RVLVVDDSAL…VDLSSVAQEL (117 aa). Residue Asp-52 is modified to 4-aspartylphosphate. A CheB-type methylesterase domain is found at 159 to 345; sequence VLIGSSTGGP…EEIVRFLEVK (187 aa). Residues Ser-164, His-191, and Asp-287 contribute to the active site.

It belongs to the CheB family. Post-translationally, phosphorylated by CheA. Phosphorylation of the N-terminal regulatory domain activates the methylesterase activity.

It is found in the cytoplasm. The catalysed reaction is [protein]-L-glutamate 5-O-methyl ester + H2O = L-glutamyl-[protein] + methanol + H(+). It carries out the reaction L-glutaminyl-[protein] + H2O = L-glutamyl-[protein] + NH4(+). Functionally, involved in chemotaxis. Part of a chemotaxis signal transduction system that modulates chemotaxis in response to various stimuli. Catalyzes the demethylation of specific methylglutamate residues introduced into the chemoreceptors (methyl-accepting chemotaxis proteins or MCP) by CheR. Also mediates the irreversible deamidation of specific glutamine residues to glutamic acid. The polypeptide is Protein-glutamate methylesterase/protein-glutamine glutaminase (Archaeoglobus fulgidus (strain ATCC 49558 / DSM 4304 / JCM 9628 / NBRC 100126 / VC-16)).